We begin with the raw amino-acid sequence, 517 residues long: Glucans biosynthesis protein G (517 aa).

Residues 1–28 form the signal peptide; sequence MKHKLQMMKMRWLSAAVMLTLYTSSSWA.

Belongs to the OpgD/OpgG family.

Its subcellular location is the periplasm. It participates in glycan metabolism; osmoregulated periplasmic glucan (OPG) biosynthesis. In terms of biological role, involved in the biosynthesis of osmoregulated periplasmic glucans (OPGs). In Escherichia coli O1:K1 / APEC, this protein is Glucans biosynthesis protein G.